The following is a 188-amino-acid chain: Succinate-acetate/proton symporter SatP (188 aa).

At 1–13 (MGNTKLANPAPLG) the chain is on the cytoplasmic side. Residues 14–34 (LMGFGMTTILLNLHNVGYFAL) traverse the membrane as a helical segment. A topological domain (periplasmic) is located at residue aspartate 35. A helical membrane pass occupies residues 36 to 56 (GIILAMGIFYGGIAQIFAGLL). Residues 57–63 (EYKKGNT) are Cytoplasmic-facing. Residues 64-84 (FGLTAFTSYGSFWLTLVAILL) traverse the membrane as a helical segment. Topologically, residues 85–97 (MPKLGLTDAPNAQ) are periplasmic. The chain crosses the membrane as a helical span at residues 98-118 (FLGVYLGLWGVFTLFMFFGTL). The Cytoplasmic portion of the chain corresponds to 119-122 (KGAR). A helical transmembrane segment spans residues 123–143 (VLQFVFFSLTVLFALLAIGNI). The Periplasmic portion of the chain corresponds to 144–148 (AGNAA). A helical transmembrane segment spans residues 149–169 (IIHFAGWIGLICGASAIYLAM). Over 170-188 (GEVLNEQFGRTVLPIGESH) the chain is Cytoplasmic.

It belongs to the acetate uptake transporter (AceTr) (TC 2.A.96) family.

It is found in the cell inner membrane. Uptake of acetate and succinate. Transport is energetically dependent on the protonmotive force. The protein is Succinate-acetate/proton symporter SatP (satP) of Escherichia coli O157:H7.